The chain runs to 342 residues: 4-amino-5-hydroxymethyl-2-methylpyrimidine phosphate synthase (342 aa).

Lys62 is subject to N6-(pyridoxal phosphate)lysine. His66 is a catalytic residue. 115-118 serves as a coordination point for pyridoxal 5'-phosphate; that stretch reads GEFG. The CCCFC; essential for catalytic activity, may be the site of iron coordination motif lies at 195-199; sequence CCCFC.

This sequence belongs to the NMT1/THI5 family. In terms of assembly, homodimer. Fe cation is required as a cofactor.

The catalysed reaction is N(6)-(pyridoxal phosphate)-L-lysyl-[4-amino-5-hydroxymethyl-2-methylpyrimidine phosphate synthase] + L-histidyl-[4-amino-5-hydroxymethyl-2-methylpyrimidine phosphate synthase] + 2 Fe(3+) + 4 H2O = L-lysyl-[4-amino-5-hydroxymethyl-2-methylpyrimidine phosphate synthase] + (2S)-2-amino-5-hydroxy-4-oxopentanoyl-[4-amino-5-hydroxymethyl-2-methylpyrimidine phosphate synthase] + 4-amino-2-methyl-5-(phosphooxymethyl)pyrimidine + 3-oxopropanoate + 2 Fe(2+) + 2 H(+). The protein operates within cofactor biosynthesis; thiamine diphosphate biosynthesis. Functionally, responsible for the formation of the pyrimidine heterocycle in the thiamine biosynthesis pathway. Catalyzes the formation of hydroxymethylpyrimidine phosphate (HMP-P) from histidine and pyridoxal phosphate (PLP). The protein uses PLP and the active site histidine to form HMP-P, generating an inactive enzyme. The enzyme can only undergo a single turnover, which suggests it is a suicide enzyme. This is 4-amino-5-hydroxymethyl-2-methylpyrimidine phosphate synthase from Aspergillus parasiticus.